A 221-amino-acid chain; its full sequence is Imidazoleglycerol-phosphate dehydratase (221 aa).

The protein belongs to the imidazoleglycerol-phosphate dehydratase family.

It catalyses the reaction D-erythro-1-(imidazol-4-yl)glycerol 3-phosphate = 3-(imidazol-4-yl)-2-oxopropyl phosphate + H2O. The protein operates within amino-acid biosynthesis; L-histidine biosynthesis; L-histidine from 5-phospho-alpha-D-ribose 1-diphosphate: step 6/9. The sequence is that of Imidazoleglycerol-phosphate dehydratase (HIS3) from Kluyveromyces marxianus (Yeast).